A 421-amino-acid chain; its full sequence is EGFR adapter protein (421 aa).

Disordered stretches follow at residues 18–94 (TFIS…PQLQ), 109–154 (DVQE…RLVD), 173–194 (EDSRPLMHSTCGSSLTSGSGCG), and 372–396 (PVPLTLPRPPSTRSQRSQGAYAGGT). Residues 21–30 (SSSSASSSSS) are compositionally biased toward low complexity. The span at 62 to 89 (FFHHHHPPAHPHPPRQQPHPHSHSHPHP) shows a compositional bias: basic residues. Residues 109–120 (DVQELSGQEHPH) are compositionally biased toward basic and acidic residues. Residues 181–194 (STCGSSLTSGSGCG) are compositionally biased toward low complexity. In terms of domain architecture, SH2 spans 286–379 (WFQAGIPREI…LLPVPLTLPR (94 aa)).

May interact (via SH2 domain) with Egfr (when phosphorylated). Detected along the wing margin, with high levels of expression in two stripes of cells on either side of the dorsal/ventral boundary and lower levels of expression in a small region at the anteroposterior boundary (at protein level). High levels of expression along two parallel stripes of cells on either side of the wing pouch dorsal/ventral boundary, and slightly lower levels of expression in a region either side of the anteroposterior boundary. Also expressed in discrete regions of the wing imaginal disk outside of the pouch. Expressed in eye imaginal disk photoreceptors with highest levels of expression in R7 photoreceptor cells.

Functionally, involved in the negative regulation of the Egfr/Ras signaling pathway. During wing morphogenesis, may function redundantly with PVRAP to inhibit Egfr activity and prevent uncontrolled cell growth. This chain is EGFR adapter protein, found in Drosophila melanogaster (Fruit fly).